A 728-amino-acid polypeptide reads, in one-letter code: Catalase B (728 aa).

Active-site residues include His-107 and Asn-180. Tyr-394 contacts heme.

Belongs to the catalase family. Requires heme as cofactor.

It is found in the secreted. It carries out the reaction 2 H2O2 = O2 + 2 H2O. Occurs in almost all aerobically respiring organisms and serves to protect cells from the toxic effects of hydrogen peroxide. This chain is Catalase B (CATB), found in Ajellomyces capsulatus (Darling's disease fungus).